A 100-amino-acid polypeptide reads, in one-letter code: Small ribosomal subunit protein uS14c (100 aa).

Belongs to the universal ribosomal protein uS14 family. As to quaternary structure, part of the 30S ribosomal subunit.

It is found in the plastid. The protein localises to the chloroplast. Binds 16S rRNA, required for the assembly of 30S particles. The polypeptide is Small ribosomal subunit protein uS14c (Stigeoclonium helveticum (Green alga)).